The primary structure comprises 90 residues: uncharacterized protein (90 aa).

This is an uncharacterized protein from Haemophilus influenzae (strain ATCC 51907 / DSM 11121 / KW20 / Rd).